A 120-amino-acid chain; its full sequence is Large ribosomal subunit protein uL18 (120 aa).

Residues 1–22 form a disordered region; it reads MKVDRKTATHRRHQRIRRKIAG. Residues 8–20 show a composition bias toward basic residues; sequence ATHRRHQRIRRKI.

This sequence belongs to the universal ribosomal protein uL18 family. As to quaternary structure, part of the 50S ribosomal subunit; part of the 5S rRNA/L5/L18/L25 subcomplex. Contacts the 5S and 23S rRNAs.

In terms of biological role, this is one of the proteins that bind and probably mediate the attachment of the 5S RNA into the large ribosomal subunit, where it forms part of the central protuberance. This is Large ribosomal subunit protein uL18 from Gloeobacter violaceus (strain ATCC 29082 / PCC 7421).